Reading from the N-terminus, the 540-residue chain is MAVIFSSSALDSHTHVDKHLVRRPIRDLENNVDMLDHLSRVLTLSYQYHALGTAIALFACACAYALVAPRQPPKFPAPQLYDETGPIDLIALDKTIREGFQNYKGKYFTLKEAHGETVILPTKFMEELKALPDNMLNLDDEIDERFLSEHSLFTTTSVGGRISTVVNSVKNELTKTLGHLMGDIHEEVVYSFQELIPPCDDWTEIDIQSKLVRIVALVSGRIFVGLPMSRNQEYLDCIIEFTLNVFFAVPEIRAYPRLLRWTSRYLNTKVRAVHKSLATMRRLMAPIIAGTKQQLEMGTGPHNMCAWNIKNSNQKERDSLNIQAQMQLATSMAAIHTTSMTVTNAIFDLAARPEYLQPLRDELQDLRATEPLPYLNKSSMPKLRKLDSFLKESHRLSPISLLNMRRKIVQPITLHDGTVLQPGMHIAFPLHQVSNDEDLWENPSQFDGFRFQKLRDLPGNESKYQFTATGTNNLDFGYGVHACPGRFFAANEIKMILVHLIDNFDFKFKGDIGRPDSLWTPGGYHPDPSVRVLLKRRLKA.

Residues 48-68 form a helical membrane-spanning segment; sequence YHALGTAIALFACACAYALVA. N-linked (GlcNAc...) asparagine glycans are attached at residues N376 and N460. C483 contributes to the heme binding site.

This sequence belongs to the cytochrome P450 family. Heme serves as cofactor.

The protein localises to the membrane. Its pathway is sesquiterpene biosynthesis. Cytochrome P450 monooxygenase; part of the gene cluster that mediates the biosynthesis of PR-toxin, a bicyclic sesquiterpene belonging to the eremophilane class and acting as a mycotoxin. The first step of the pathway is catalyzed by the aristolochene synthase which performs the cyclization of trans,trans-farnesyl diphosphate (FPP) to the bicyclic sesquiterpene aristolochene. Following the formation of aristolochene, the non-oxygenated aristolochene is converted to the trioxygenated intermediate eremofortin B, via 7-epi-neopetasone. This conversion appears to involve three enzymes, a hydroxysterol oxidase-like enzyme, the quinone-oxidase prx3 that forms the quinone-type-structure in the bicyclic nucleus of aristolochene with the C8-oxo group and the C-3 hydroxyl group, and the P450 monooxygenase ORF6 that introduces the epoxide at the double bond between carbons 1 and 2. No monoxy or dioxy-intermediates have been reported to be released to the broth, so these three early oxidative reactions may be coupled together. Eremofortin B is further oxidized by another P450 monooxygenase, that introduces a second epoxide between carbons 7 and 11 prior to acetylation to eremofortin A by the acetyltransferase ORF8. The second epoxidation may be performed by a second P450 monooxygenase. After the acetylation step, eremofortin A is converted to eremofortin C and then to PR-toxin. First the conversion of eremofortin A to eremofortin C proceeds by oxidation of the side chain of the molecule at C-12 and is catalyzed by the short-chain oxidoreductase prx1. The cytochrome P450 monooxygenase ORF6 is probably also involved in this step. The primary alcohol formed at C-12 is finally oxidized by the short-chain alcohol dehydrogenase prx4 that forms PR-toxin. This chain is Cytochrome P450 monooxygenase ORF5, found in Penicillium roqueforti (strain FM164).